The chain runs to 276 residues: Mitochondrial outer membrane protein porin 2 (276 aa).

Ser-76 carries the phosphoserine modification. A Phosphothreonine modification is found at Thr-236.

The protein belongs to the eukaryotic mitochondrial porin (TC 1.B.8.1) family. As to expression, expressed in root tips, steles, leaves, sepals, petals, stamen and pistils.

The protein localises to the mitochondrion outer membrane. In terms of biological role, forms a channel through the mitochondrial outer membrane that allows diffusion of small hydrophilic molecules. The channel adopts an open conformation at low or zero membrane potential and a closed conformation at potentials above 30-40 mV. The open state has a weak anion selectivity whereas the closed state is cation-selective. Involved in plant growth and development at the vegetative and reproductive stages. Is important for leaf and pollen development and mitochondrial membrane potential steady state. May be involved in ABA-mediated early seedling development and disease resistance. This is Mitochondrial outer membrane protein porin 2 (VDAC2) from Arabidopsis thaliana (Mouse-ear cress).